The chain runs to 148 residues: D-aminoacyl-tRNA deacylase (148 aa).

Positions 137-138 (GP) match the Gly-cisPro motif, important for rejection of L-amino acids motif.

This sequence belongs to the DTD family. Homodimer.

Its subcellular location is the cytoplasm. It catalyses the reaction glycyl-tRNA(Ala) + H2O = tRNA(Ala) + glycine + H(+). The catalysed reaction is a D-aminoacyl-tRNA + H2O = a tRNA + a D-alpha-amino acid + H(+). An aminoacyl-tRNA editing enzyme that deacylates mischarged D-aminoacyl-tRNAs. Also deacylates mischarged glycyl-tRNA(Ala), protecting cells against glycine mischarging by AlaRS. Acts via tRNA-based rather than protein-based catalysis; rejects L-amino acids rather than detecting D-amino acids in the active site. By recycling D-aminoacyl-tRNA to D-amino acids and free tRNA molecules, this enzyme counteracts the toxicity associated with the formation of D-aminoacyl-tRNA entities in vivo and helps enforce protein L-homochirality. This Lactiplantibacillus plantarum (strain ATCC BAA-793 / NCIMB 8826 / WCFS1) (Lactobacillus plantarum) protein is D-aminoacyl-tRNA deacylase.